The following is a 672-amino-acid chain: SHC SH2 domain-binding protein 1 (672 aa).

The residue at position 2 (alanine 2) is an N-acetylalanine. Position 5 is a phosphoserine (serine 5). Threonine 7 bears the Phosphothreonine mark. 5 positions are modified to phosphoserine: serine 31, serine 42, serine 44, serine 47, and serine 273. PbH1 repeat units lie at residues 428–451 (GADIKISGIKFVQHDAVEGILIVH), 452–473 (RGKTTLENCVLQCETTGVTVRT), 474–496 (SAEFLMKNSDLYGAKGAGIEIYP), 497–518 (GSQCTLSDNGIHHCKEGILIKD), and 526–548 (IPKISMVNNIIHNNEGYGVVLVK). At serine 634 the chain carries Phosphoserine.

Interacts directly with isoform p52shc of SHC1 via its SH2 domain. Interacts with TRIM71; leading to enhanced SHCBP1 protein stability. Interacts with both members of the centralspindlin complex, KIF23 and RACGAP1.

It localises to the midbody. The protein localises to the cytoplasm. The protein resides in the cytoskeleton. It is found in the spindle. In terms of biological role, may play a role in signaling pathways governing cellular proliferation, cell growth and differentiation. May be a component of a novel signaling pathway downstream of Shc. Acts as a positive regulator of FGF signaling in neural progenitor cells. This Homo sapiens (Human) protein is SHC SH2 domain-binding protein 1 (SHCBP1).